A 441-amino-acid chain; its full sequence is Tryptophan aminotransferase-related protein 1 (441 aa).

Residues Tyr-110, 152 to 153 (ST), Asn-219, 239 to 242 (DLAY), 262 to 265 (TVSK), and Arg-273 each bind pyridoxal 5'-phosphate. Lys-265 is subject to N6-(pyridoxal phosphate)lysine.

The protein belongs to the alliinase family. The cofactor is pyridoxal 5'-phosphate. As to expression, highly expressed in anthers. Expressed at low levels in ovaries.

The enzyme catalyses L-tryptophan + 2-oxoglutarate = indole-3-pyruvate + L-glutamate. Its pathway is plant hormone metabolism; auxin biosynthesis. Functionally, probable tryptophan aminotransferase that may be involved in the regulation of auxin production in developing rice grains. The polypeptide is Tryptophan aminotransferase-related protein 1 (Oryza sativa subsp. japonica (Rice)).